Reading from the N-terminus, the 791-residue chain is uncharacterized protein (791 aa).

4 helical membrane-spanning segments follow: residues 104 to 124 (MWIL…FFLM), 131 to 151 (IAAI…YYII), 177 to 197 (ACLY…TLII), and 226 to 246 (WSGL…PSVL). A glycan (N-linked (GlcNAc...) asparagine) is linked at Asn-265. Helical transmembrane passes span 274–294 (FFIV…IFPA), 309–329 (SAVL…PLTL), 346–366 (WATC…LPGL), 421–441 (FIIN…SFFL), 471–491 (VHWG…FAFT), 501–521 (SYGF…LSLI), 533–553 (AFFE…LLYF), and 583–603 (LVAA…SAVT). N-linked (GlcNAc...) asparagine glycosylation is present at Asn-621. 3 helical membrane passes run 653-673 (FVMW…LLQI), 697-717 (SVTG…NYLI), and 733-753 (AAAM…CVVY). Residue Asn-759 is glycosylated (N-linked (GlcNAc...) asparagine).

This sequence belongs to the oligopeptide OPT transporter family.

It is found in the membrane. This is an uncharacterized protein from Schizosaccharomyces pombe (strain 972 / ATCC 24843) (Fission yeast).